Consider the following 388-residue polypeptide: Chaperone protein DnaJ (388 aa).

A J domain is found at D5–G69. The CR-type zinc finger occupies G145–K227. Residues C158, C161, C175, C178, C201, C204, C215, and C218 each contribute to the Zn(2+) site. CXXCXGXG motif repeat units follow at residues C158–G165, C175–G182, C201–G208, and C215–G222.

The protein belongs to the DnaJ family. As to quaternary structure, homodimer. Zn(2+) is required as a cofactor.

It localises to the cytoplasm. Participates actively in the response to hyperosmotic and heat shock by preventing the aggregation of stress-denatured proteins and by disaggregating proteins, also in an autonomous, DnaK-independent fashion. Unfolded proteins bind initially to DnaJ; upon interaction with the DnaJ-bound protein, DnaK hydrolyzes its bound ATP, resulting in the formation of a stable complex. GrpE releases ADP from DnaK; ATP binding to DnaK triggers the release of the substrate protein, thus completing the reaction cycle. Several rounds of ATP-dependent interactions between DnaJ, DnaK and GrpE are required for fully efficient folding. Also involved, together with DnaK and GrpE, in the DNA replication of plasmids through activation of initiation proteins. The chain is Chaperone protein DnaJ from Lactobacillus gasseri (strain ATCC 33323 / DSM 20243 / BCRC 14619 / CIP 102991 / JCM 1131 / KCTC 3163 / NCIMB 11718 / NCTC 13722 / AM63).